Reading from the N-terminus, the 124-residue chain is Small ribosomal subunit protein uS12 (124 aa).

Positions 1–32 (MPTIQQLVRKGRQAKTTKTKTPALKGSPQRRG) are disordered. Positions 9–18 (RKGRQAKTTK) are enriched in basic residues. Position 89 is a 3-methylthioaspartic acid (Asp-89). The interval 105-124 (QGVRNRKQARSRYGAKKEKS) is disordered. Positions 108-118 (RNRKQARSRYG) are enriched in basic residues.

The protein belongs to the universal ribosomal protein uS12 family. In terms of assembly, part of the 30S ribosomal subunit. Contacts proteins S8 and S17. May interact with IF1 in the 30S initiation complex.

With S4 and S5 plays an important role in translational accuracy. Functionally, interacts with and stabilizes bases of the 16S rRNA that are involved in tRNA selection in the A site and with the mRNA backbone. Located at the interface of the 30S and 50S subunits, it traverses the body of the 30S subunit contacting proteins on the other side and probably holding the rRNA structure together. The combined cluster of proteins S8, S12 and S17 appears to hold together the shoulder and platform of the 30S subunit. This chain is Small ribosomal subunit protein uS12, found in Salinispora arenicola (strain CNS-205).